The sequence spans 553 residues: CTP synthase (553 aa).

The amidoligase domain stretch occupies residues 1–277 (MPTEPETDYD…DQYVMEELDI (277 aa)). S26 contacts CTP. S26 is a UTP binding site. Residues 27-32 (GLGKGI) and D84 contribute to the ATP site. Residues D84 and E152 each contribute to the Mg(2+) site. CTP-binding positions include 159-161 (DIE), 198-203 (KTKPTQ), and K234. Residues 198–203 (KTKPTQ) and K234 contribute to the UTP site. The region spanning 307-544 (LVGKYDLEDA…LEAVLGDDPH (238 aa)) is the Glutamine amidotransferase type-1 domain. G364 serves as a coordination point for L-glutamine. C391 functions as the Nucleophile; for glutamine hydrolysis in the catalytic mechanism. Residues 392 to 395 (LGFQ), E415, and R472 contribute to the L-glutamine site. Active-site residues include H517 and E519.

The protein belongs to the CTP synthase family. Homotetramer.

The enzyme catalyses UTP + L-glutamine + ATP + H2O = CTP + L-glutamate + ADP + phosphate + 2 H(+). It catalyses the reaction L-glutamine + H2O = L-glutamate + NH4(+). It carries out the reaction UTP + NH4(+) + ATP = CTP + ADP + phosphate + 2 H(+). Its pathway is pyrimidine metabolism; CTP biosynthesis via de novo pathway; CTP from UDP: step 2/2. Allosterically activated by GTP, when glutamine is the substrate; GTP has no effect on the reaction when ammonia is the substrate. The allosteric effector GTP functions by stabilizing the protein conformation that binds the tetrahedral intermediate(s) formed during glutamine hydrolysis. Inhibited by the product CTP, via allosteric rather than competitive inhibition. Catalyzes the ATP-dependent amination of UTP to CTP with either L-glutamine or ammonia as the source of nitrogen. Regulates intracellular CTP levels through interactions with the four ribonucleotide triphosphates. This chain is CTP synthase, found in Haloarcula marismortui (strain ATCC 43049 / DSM 3752 / JCM 8966 / VKM B-1809) (Halobacterium marismortui).